A 482-amino-acid polypeptide reads, in one-letter code: Putative transposase R186 (482 aa).

Zn(2+) contacts are provided by C416, C419, C433, and C435.

The protein in the central section; belongs to the transposase 2 family. This sequence in the C-terminal section; belongs to the transposase 35 family.

This chain is Putative transposase R186, found in Acanthamoeba polyphaga (Amoeba).